The chain runs to 300 residues: Ribosomal protein L11 methyltransferase (300 aa).

S-adenosyl-L-methionine-binding residues include threonine 152, glycine 173, aspartate 195, and asparagine 234.

This sequence belongs to the methyltransferase superfamily. PrmA family.

It localises to the cytoplasm. It catalyses the reaction L-lysyl-[protein] + 3 S-adenosyl-L-methionine = N(6),N(6),N(6)-trimethyl-L-lysyl-[protein] + 3 S-adenosyl-L-homocysteine + 3 H(+). Its function is as follows. Methylates ribosomal protein L11. The chain is Ribosomal protein L11 methyltransferase from Burkholderia lata (strain ATCC 17760 / DSM 23089 / LMG 22485 / NCIMB 9086 / R18194 / 383).